The following is a 488-amino-acid chain: 3-octaprenyl-4-hydroxybenzoate carboxy-lyase (488 aa).

N172 is a Mn(2+) binding site. Prenylated FMN-binding positions include 175-177 (IYR), 189-191 (RWL), and 194-195 (RG). Residue E238 participates in Mn(2+) binding. D287 functions as the Proton donor in the catalytic mechanism.

The protein belongs to the UbiD family. As to quaternary structure, homohexamer. The cofactor is prenylated FMN. Mn(2+) serves as cofactor.

It is found in the cell membrane. The catalysed reaction is a 4-hydroxy-3-(all-trans-polyprenyl)benzoate + H(+) = a 2-(all-trans-polyprenyl)phenol + CO2. The protein operates within cofactor biosynthesis; ubiquinone biosynthesis. In terms of biological role, catalyzes the decarboxylation of 3-octaprenyl-4-hydroxy benzoate to 2-octaprenylphenol, an intermediate step in ubiquinone biosynthesis. The sequence is that of 3-octaprenyl-4-hydroxybenzoate carboxy-lyase from Pseudomonas putida (strain GB-1).